A 570-amino-acid chain; its full sequence is Multidrug and toxin extrusion protein 1 (570 aa).

Met1 carries the N-acetylmethionine modification. Residues Met1–Ala37 are Cytoplasmic-facing. A helical transmembrane segment spans residues Leu38–Ile58. Residues Ser59–Asp72 are Extracellular-facing. Residues Ala73 to Ser93 form a helical membrane-spanning segment. Over Ser94–Ala120 the chain is Cytoplasmic. A helical membrane pass occupies residues Leu121 to Leu141. The Extracellular portion of the chain corresponds to Leu142–Arg152. The helical transmembrane segment at Leu153–Leu173 threads the bilayer. Residues Gln174–Lys176 are Cytoplasmic-facing. Residues Tyr177–Val197 traverse the membrane as a helical segment. Over Asn198–Ser216 the chain is Extracellular. A helical transmembrane segment spans residues Ala217–Gly237. At Lys238 to Glu251 the chain is on the cytoplasmic side. Residues Cys252–Met272 traverse the membrane as a helical segment. At Glu273–Gln295 the chain is on the extracellular side. A helical transmembrane segment spans residues Ser296–Ala316. The Cytoplasmic portion of the chain corresponds to Ser317 to Ser336. Residues Thr337–Cys357 form a helical membrane-spanning segment. Residues Lys358–Asp370 are Extracellular-facing. A helical transmembrane segment spans residues Ile371–Leu391. The Cytoplasmic portion of the chain corresponds to Ala392–Gly408. Residues Ala409 to Phe429 traverse the membrane as a helical segment. Residues Ala430–Gly437 are Extracellular-facing. The chain crosses the membrane as a helical span at residues Leu438–Ile458. The Cytoplasmic portion of the chain corresponds to Gln459–Arg546. Positions Asp508–Ser534 are disordered. Over residues Met521–Asp533 the composition is skewed to basic and acidic residues. A helical membrane pass occupies residues Gly547 to Val567. Over Arg568–Gln570 the chain is Extracellular.

This sequence belongs to the multi antimicrobial extrusion (MATE) (TC 2.A.66.1) family.

The protein localises to the cell membrane. The protein resides in the apical cell membrane. It catalyses the reaction thiamine(out) + H(+)(in) = thiamine(in) + H(+)(out). The catalysed reaction is estrone 3-sulfate(in) + H(+)(out) = estrone 3-sulfate(out) + H(+)(in). It carries out the reaction creatinine(in) + H(+)(out) = creatinine(out) + H(+)(in). The enzyme catalyses agmatine(in) + H(+)(out) = agmatine(out) + H(+)(in). Functionally, multidrug efflux pump that functions as a H(+)/organic cation antiporter. Plays a physiological role in the excretion of cationic compounds including endogenous metabolites, drugs, toxins through the kidney and liver, into urine and bile respectively. Mediates the efflux of endogenous compounds such as creatinine, vitamin B1/thiamine, agmatine and estrone-3-sulfate. May also contribute to regulate the transport of cationic compounds in testis across the blood-testis-barrier. This is Multidrug and toxin extrusion protein 1 (SLC47A1) from Pongo abelii (Sumatran orangutan).